A 433-amino-acid polypeptide reads, in one-letter code: Serine hydroxymethyltransferase (433 aa).

(6S)-5,6,7,8-tetrahydrofolate-binding positions include Leu-132 and 136-138; that span reads GHL. An N6-(pyridoxal phosphate)lysine modification is found at Lys-241.

This sequence belongs to the SHMT family. Homodimer. Requires pyridoxal 5'-phosphate as cofactor.

The protein resides in the cytoplasm. It carries out the reaction (6R)-5,10-methylene-5,6,7,8-tetrahydrofolate + glycine + H2O = (6S)-5,6,7,8-tetrahydrofolate + L-serine. It functions in the pathway one-carbon metabolism; tetrahydrofolate interconversion. The protein operates within amino-acid biosynthesis; glycine biosynthesis; glycine from L-serine: step 1/1. Functionally, catalyzes the reversible interconversion of serine and glycine with tetrahydrofolate (THF) serving as the one-carbon carrier. This reaction serves as the major source of one-carbon groups required for the biosynthesis of purines, thymidylate, methionine, and other important biomolecules. Also exhibits THF-independent aldolase activity toward beta-hydroxyamino acids, producing glycine and aldehydes, via a retro-aldol mechanism. The protein is Serine hydroxymethyltransferase of Bradyrhizobium sp. (strain ORS 278).